Consider the following 762-residue polypeptide: uncharacterized protein (762 aa).

The disordered stretch occupies residues 734-762 (QQRPRVAAAAPPPPPQPPAAAVPTTQAST). Over residues 743–753 (APPPPPQPPAA) the composition is skewed to pro residues.

This is an uncharacterized protein from Ostreid herpesvirus 1 (isolate France) (OsHV-1).